Here is a 198-residue protein sequence, read N- to C-terminus: Small ribosomal subunit protein uS4c (198 aa).

In terms of domain architecture, S4 RNA-binding spans 85–145 (LRLDATIFRL…PKKFTIILIC (61 aa)).

This sequence belongs to the universal ribosomal protein uS4 family. Part of the 30S ribosomal subunit.

The protein resides in the plastid. The protein localises to the apicoplast. One of the primary rRNA binding proteins, it binds directly to 16S rRNA where it nucleates assembly of the body of the 30S subunit. The protein is Small ribosomal subunit protein uS4c (rps4) of Toxoplasma gondii.